A 695-amino-acid chain; its full sequence is NADPH--cytochrome P450 reductase (695 aa).

The Lumenal portion of the chain corresponds to methionine 1–aspartate 8. A helical transmembrane segment spans residues leucine 9–valine 31. Topologically, residues alanine 32–serine 695 are cytoplasmic. Positions cysteine 66–tryptophan 221 constitute a Flavodoxin-like domain. FMN contacts are provided by residues serine 72 to alanine 77, alanine 123 to glycine 126, leucine 169 to asparagine 178, and aspartate 204. The FAD-binding FR-type domain occupies histidine 277–proline 538. Arginine 296 provides a ligand contact to NADP(+). FAD contacts are provided by residues arginine 451 to serine 454, threonine 469 to valine 471, and glycine 486 to threonine 489. NADP(+)-binding positions include threonine 552, serine 614 to arginine 615, lysine 620 to glutamine 624, and glutamate 656. Tryptophan 694 serves as a coordination point for FAD.

This sequence belongs to the NADPH--cytochrome P450 reductase family. In the N-terminal section; belongs to the flavodoxin family. It in the C-terminal section; belongs to the flavoprotein pyridine nucleotide cytochrome reductase family. Requires FAD as cofactor. FMN serves as cofactor.

The protein localises to the endoplasmic reticulum membrane. It is found in the mitochondrion outer membrane. Its subcellular location is the cell membrane. It catalyses the reaction 2 oxidized [cytochrome P450] + NADPH = 2 reduced [cytochrome P450] + NADP(+) + H(+). In terms of biological role, this enzyme is required for electron transfer from NADP to cytochrome P450 in microsomes. It can also provide electron transfer to heme oxygenase and cytochrome B5. Involved in ergosterol biosynthesis. This Aspergillus niger (strain ATCC MYA-4892 / CBS 513.88 / FGSC A1513) protein is NADPH--cytochrome P450 reductase.